Reading from the N-terminus, the 384-residue chain is Sialyltransferase-like protein 3 (384 aa).

Residues 1 to 5 (MKRRH) lie on the Cytoplasmic side of the membrane. The helical; Signal-anchor for type II membrane protein transmembrane segment at 6 to 26 (WSHPSCGLLLLVAVFCLLLVF) threads the bilayer. Residues 27 to 384 (RCSQLRHSGD…FRLPPVSFYR (358 aa)) lie on the Lumenal side of the membrane. N241 carries N-linked (GlcNAc...) asparagine glycosylation.

Belongs to the glycosyltransferase 29 family.

It localises to the golgi apparatus membrane. Functionally, possesses sialyltransferase-like activity in vitro. Transfers sialic acid to the glycoprotein asialofetuin. The transferred sialic acid is linked to galactose of Gal-beta-1,3-GalNAc through alpha-2,6-linkage. This Oryza sativa subsp. japonica (Rice) protein is Sialyltransferase-like protein 3.